Reading from the N-terminus, the 362-residue chain is Apelin receptor A (362 aa).

Residues 1–34 (MEPTSEYTETYDYYDTGYNDSGCDYSEWEPSYSL) lie on the Extracellular side of the membrane. An N-linked (GlcNAc...) asparagine glycan is attached at Asn-19. 2 disulfide bridges follow: Cys-23-Cys-286 and Cys-105-Cys-184. A helical transmembrane segment spans residues 35-55 (IPVLYMLIFILGLSGNGVVIF). Topologically, residues 56–73 (TVWRAKSKRRAADVYIGN) are cytoplasmic. The chain crosses the membrane as a helical span at residues 74–94 (LALADLTFVITLPLWAVYTAL). The Extracellular segment spans residues 95-106 (GYHWPFGVALCK). The chain crosses the membrane as a helical span at residues 107-127 (ISSYVVLVNMYASVFCLTCLS). Over 128-149 (FDRYLAIVHSLSSGRLRSRATM) the chain is Cytoplasmic. The helical transmembrane segment at 150–170 (LASLGAIWFLSCLLAVPTLLF) threads the bilayer. The Extracellular portion of the chain corresponds to 171–211 (RTTVDDTGSNRTTCAMDFSLVTLNQDHESLWIAGLSLSSSA). Asn-180 carries N-linked (GlcNAc...) asparagine glycosylation. Residues 212–232 (LGFLLPFLAMTVCYCFIGCTV) traverse the membrane as a helical segment. Residues 233–248 (TRHFSHLRKEDQKKRR) are Cytoplasmic-facing. The chain crosses the membrane as a helical span at residues 249 to 269 (LLKIITTLVVVFAFCWTPFHV). The Extracellular portion of the chain corresponds to 270–284 (LKSMDALSYLDLAPN). The helical transmembrane segment at 285 to 305 (SCGFLHFLLLAHPYATCLAYV) threads the bilayer. Residues 306 to 362 (NSCLNPFLYAFFDLRFRSQCLCLLNLKKAMHGHMSSMSSTLSAQTQKSEVQSLATKV) are Cytoplasmic-facing.

This sequence belongs to the G-protein coupled receptor 1 family. In terms of tissue distribution, first expressed before epiboly in dorsal precursors. During epiboly, expressed in the enveloping layer, yolk syncytial layer and migrating mesendoderm. During segmentation stages, expressed in epithelial structures such as adaxial cells, border cells of the newly formed somites, developing lens, otic vesicles and venous vasculature.

The protein localises to the cell membrane. Its function is as follows. G protein-coupled receptor for peptide hormones apelin (apln) and apelin receptor early endogenous ligand (apela), that plays a role in the regulation of normal cardiovascular function and fluid homeostasis. When acting as apelin receptor, activates both G(i) protein pathway that inhibits adenylate cyclase activity, and the beta-arrestin pathway that promotes internalization of the receptor. Also functions as mechanoreceptor that is activated by pathological stimuli in a G-protein-independent fashion to induce beta-arrestin signaling, hence eliciting cardiac hypertrophy. However, the presence of apelin ligand blunts cardiac hypertrophic induction from APLNR/APJ on response to pathological stimuli. Plays a key role in early development such as gastrulation, blood vessels formation and heart morphogenesis by acting as a receptor for apela hormone, promoting endoderm and mesendoderm cell migration and regulating the migration of cells fated to become myocardial progenitors, respectively. Positively regulates angioblast migration toward the embryonic midline, i.e. the position of the future vessel formation, during vasculogenesis. May promote sinus venosus (SV)-derived endothelial cells migration into the developing heart to promote coronary blood vessel development. Required for cardiovascular development, particularly for intersomitic vein angiogenesis by acting as a receptor for apln hormone. Also plays a role in various processes in adults such as regulation of blood vessel formation, blood pressure, heart contractility, and heart failure. Acts redundantly with agtrl1b in heart development. The polypeptide is Apelin receptor A (aplnra) (Danio rerio (Zebrafish)).